Here is a 1048-residue protein sequence, read N- to C-terminus: uncharacterized protein (1048 aa).

The interval 601–629 is disordered; that stretch reads ENQINEEQQTNVENEQQTEQQFENEDKET. Residues 605-621 are compositionally biased toward low complexity; sequence NEEQQTNVENEQQTEQQ.

This is an uncharacterized protein from Methanocaldococcus jannaschii (strain ATCC 43067 / DSM 2661 / JAL-1 / JCM 10045 / NBRC 100440) (Methanococcus jannaschii).